The primary structure comprises 130 residues: MIGNWNYGTGRRKSAVARVFIKSGKGDIVVNGKPIKEYFARETSLMIVRQPLELTEHAETFDIKVNVTGGGETGQAGAVRHGITRALIDYDATLKSALSKAGYVTRDAREVERKKVGFHKARRRKQFSKR.

This sequence belongs to the universal ribosomal protein uS9 family.

The protein is Small ribosomal subunit protein uS9 of Cupriavidus pinatubonensis (strain JMP 134 / LMG 1197) (Cupriavidus necator (strain JMP 134)).